The following is a 264-amino-acid chain: NAD kinase 1 (264 aa).

Asp-45 acts as the Proton acceptor in catalysis. NAD(+)-binding positions include 45–46 (DG), Gly-46, 122–123 (NE), Arg-148, Asp-150, Ser-158, 161–166 (TAYNKS), and His-223.

Belongs to the NAD kinase family. Homotetramer. Requires a divalent metal cation as cofactor.

Its subcellular location is the cytoplasm. The enzyme catalyses NAD(+) + ATP = ADP + NADP(+) + H(+). Its activity is regulated as follows. Competitively inhibited by 5'-thioacetyladenosine (TAA) and di-(5'-thioadenosine) (DTA). Its function is as follows. Involved in the regulation of the intracellular balance of NAD and NADP, and is a key enzyme in the biosynthesis of NADP. Catalyzes specifically the phosphorylation on 2'-hydroxyl of the adenosine moiety of NAD to yield NADP. The polypeptide is NAD kinase 1 (Listeria monocytogenes serovar 1/2a (strain ATCC BAA-679 / EGD-e)).